A 200-amino-acid chain; its full sequence is SKP1-like protein 19 (200 aa).

Basic and acidic residues predominate over residues 67 to 92; the sequence is DDVVETHESSTKGDKTVEEAKKKPDD. The disordered stretch occupies residues 67–109; sequence DDVVETHESSTKGDKTVEEAKKKPDDVAVPESTEGDDEAEDKK. The tract at residues 132–190 is interaction with the F-box domain of F-box proteins; that stretch reads ILAANYLNVQGLFDLCSKTIADYIKDMTPEEVRELFNIENDFTPEEEEAIRNENAWTFE.

Belongs to the SKP1 family. As to quaternary structure, part of a SCF (SKP1-cullin-F-box) protein ligase complex. Interacts with CPR1/CPR30. Expressed in leaves and flowers.

The protein localises to the nucleus. Its pathway is protein modification; protein ubiquitination. Functionally, involved in ubiquitination and subsequent proteasomal degradation of target proteins. Together with CUL1, RBX1 and a F-box protein, it forms a SCF E3 ubiquitin ligase complex. The functional specificity of this complex depends on the type of F-box protein. In the SCF complex, it serves as an adapter that links the F-box protein to CUL1. The sequence is that of SKP1-like protein 19 (ASK19) from Arabidopsis thaliana (Mouse-ear cress).